Here is a 219-residue protein sequence, read N- to C-terminus: Thiamine-phosphate synthase (219 aa).

Residues 48-52 (QLREK) and Asn-80 each bind 4-amino-2-methyl-5-(diphosphooxymethyl)pyrimidine. Mg(2+) is bound by residues Asp-81 and Asp-100. Position 119 (Ser-119) interacts with 4-amino-2-methyl-5-(diphosphooxymethyl)pyrimidine. Position 145–147 (145–147 (TPT)) interacts with 2-[(2R,5Z)-2-carboxy-4-methylthiazol-5(2H)-ylidene]ethyl phosphate. Lys-148 contacts 4-amino-2-methyl-5-(diphosphooxymethyl)pyrimidine. Residues Gly-176 and 196 to 197 (VS) contribute to the 2-[(2R,5Z)-2-carboxy-4-methylthiazol-5(2H)-ylidene]ethyl phosphate site.

Belongs to the thiamine-phosphate synthase family. The cofactor is Mg(2+).

It catalyses the reaction 2-[(2R,5Z)-2-carboxy-4-methylthiazol-5(2H)-ylidene]ethyl phosphate + 4-amino-2-methyl-5-(diphosphooxymethyl)pyrimidine + 2 H(+) = thiamine phosphate + CO2 + diphosphate. The catalysed reaction is 2-(2-carboxy-4-methylthiazol-5-yl)ethyl phosphate + 4-amino-2-methyl-5-(diphosphooxymethyl)pyrimidine + 2 H(+) = thiamine phosphate + CO2 + diphosphate. The enzyme catalyses 4-methyl-5-(2-phosphooxyethyl)-thiazole + 4-amino-2-methyl-5-(diphosphooxymethyl)pyrimidine + H(+) = thiamine phosphate + diphosphate. It participates in cofactor biosynthesis; thiamine diphosphate biosynthesis; thiamine phosphate from 4-amino-2-methyl-5-diphosphomethylpyrimidine and 4-methyl-5-(2-phosphoethyl)-thiazole: step 1/1. In terms of biological role, condenses 4-methyl-5-(beta-hydroxyethyl)thiazole monophosphate (THZ-P) and 2-methyl-4-amino-5-hydroxymethyl pyrimidine pyrophosphate (HMP-PP) to form thiamine monophosphate (TMP). The protein is Thiamine-phosphate synthase of Albidiferax ferrireducens (strain ATCC BAA-621 / DSM 15236 / T118) (Rhodoferax ferrireducens).